Here is a 108-residue protein sequence, read N- to C-terminus: ATP synthase peripheral stalk subunit F6, mitochondrial (108 aa).

The N-terminal 32 residues, 1 to 32 (MTVQRIFRLSSVLRSAVSVHLRRNIGVTAVAF), are a transit peptide targeting the mitochondrion. 3 positions are modified to N6-acetyllysine: Lys41, Lys46, and Lys79. Residues Lys84 and Lys99 each carry the N6-acetyllysine; alternate modification. An N6-succinyllysine; alternate mark is found at Lys84 and Lys99. At Lys105 the chain carries N6-acetyllysine. Position 108 is a phosphoserine (Ser108).

It belongs to the eukaryotic ATPase subunit F6 family. In terms of assembly, component of the ATP synthase complex composed at least of ATP5F1A/subunit alpha, ATP5F1B/subunit beta, ATP5MC1/subunit c (homooctomer), MT-ATP6/subunit a, MT-ATP8/subunit 8, ATP5ME/subunit e, ATP5MF/subunit f, ATP5MG/subunit g, ATP5MK/subunit k, ATP5MJ/subunit j, ATP5F1C/subunit gamma, ATP5F1D/subunit delta, ATP5F1E/subunit epsilon, ATP5PF/subunit F6, ATP5PB/subunit b, ATP5PD/subunit d, ATP5PO/subunit OSCP. ATP synthase complex consists of a soluble F(1) head domain (subunits alpha(3) and beta(3)) - the catalytic core - and a membrane F(0) domain - the membrane proton channel (subunits c, a, 8, e, f, g, k and j). These two domains are linked by a central stalk (subunits gamma, delta, and epsilon) rotating inside the F1 region and a stationary peripheral stalk (subunits F6, b, d, and OSCP).

The protein resides in the mitochondrion. Its subcellular location is the mitochondrion inner membrane. Functionally, subunit F6, of the mitochondrial membrane ATP synthase complex (F(1)F(0) ATP synthase or Complex V) that produces ATP from ADP in the presence of a proton gradient across the membrane which is generated by electron transport complexes of the respiratory chain. ATP synthase complex consist of a soluble F(1) head domain - the catalytic core - and a membrane F(1) domain - the membrane proton channel. These two domains are linked by a central stalk rotating inside the F(1) region and a stationary peripheral stalk. During catalysis, ATP synthesis in the catalytic domain of F(1) is coupled via a rotary mechanism of the central stalk subunits to proton translocation. In vivo, can only synthesize ATP although its ATP hydrolase activity can be activated artificially in vitro. Part of the complex F(0) domain. Part of the complex F(0) domain and the peripheric stalk, which acts as a stator to hold the catalytic alpha(3)beta(3) subcomplex and subunit a/ATP6 static relative to the rotary elements. This Rattus norvegicus (Rat) protein is ATP synthase peripheral stalk subunit F6, mitochondrial.